We begin with the raw amino-acid sequence, 240 residues long: Ribose-5-phosphate isomerase (240 aa).

Substrate-binding positions include 34–37, 88–91, and 101–104; these read SGST, DGAD, and KGGG. The active-site Proton acceptor is the glutamate 110. Lysine 128 is a substrate binding site.

This sequence belongs to the ribose 5-phosphate isomerase family.

The protein localises to the cytoplasm. It carries out the reaction aldehydo-D-ribose 5-phosphate = D-ribulose 5-phosphate. Its pathway is carbohydrate degradation; pentose phosphate pathway; D-ribose 5-phosphate from D-ribulose 5-phosphate (non-oxidative stage): step 1/1. Its function is as follows. Involved in the first step of the non-oxidative branch of the pentose phosphate pathway. It catalyzes the reversible conversion of ribose-5-phosphate to ribulose 5-phosphate. The sequence is that of Ribose-5-phosphate isomerase (RKI1) from Candida albicans (strain SC5314 / ATCC MYA-2876) (Yeast).